The primary structure comprises 995 residues: UPF0182 protein MMAR_1371 (995 aa).

7 consecutive transmembrane segments (helical) span residues 18–38, 63–83, 113–133, 175–195, 210–230, 259–279, and 287–307; these read VLIL…RLID, FLVF…GLAL, LFGI…AQSY, FVAI…FGGI, IQLV…YWLD, KLIL…AIVL, and IGLV…PMIV. Positions 900–948 are disordered; that stretch reads AATGIQPTEGGAPANVPPNNAPSPEALPGTPPSPPTAVPPAPEASVTLS. Positions 928-941 are enriched in pro residues; that stretch reads GTPPSPPTAVPPAP.

This sequence belongs to the UPF0182 family.

It is found in the cell membrane. The sequence is that of UPF0182 protein MMAR_1371 from Mycobacterium marinum (strain ATCC BAA-535 / M).